Reading from the N-terminus, the 198-residue chain is MDTLKKAGTMLAHLDLFHSMLDLRRLLQLAAYMKERGDRAMLISAGEITLIGSESMTAPEVVTSKGETIDAATAYRVLGQLEGYEAPEYAVNREALAALNARAVAELEGSEALRAFGDTLARISAAPTDPAGPERPGTDRAERTAAERTASERATHDRASTERPARPRRSAEPEAVRTEDAPQPNAEASEAGENTPAA.

Residues 124–198 (SAAPTDPAGP…SEAGENTPAA (75 aa)) are disordered. A compositionally biased stretch (basic and acidic residues) spans 136-180 (PGTDRAERTAAERTASERATHDRASTERPARPRRSAEPEAVRTED).

In terms of biological role, appears to contribute to D.radiodurans capacity to survive exposure to ionizing radiation. May play a role in DNA repair and genome reconstitution. The polypeptide is DNA damage response protein D (ddrD) (Deinococcus radiodurans (strain ATCC 13939 / DSM 20539 / JCM 16871 / CCUG 27074 / LMG 4051 / NBRC 15346 / NCIMB 9279 / VKM B-1422 / R1)).